The primary structure comprises 76 residues: Sec-independent protein translocase protein TatA (76 aa).

A helical membrane pass occupies residues 1 to 21 (MGSFSIWHWLIVLVIVMLVFG). Basic and acidic residues-rich tracts occupy residues 41 to 50 (DGMKDGEDKG) and 57 to 76 (KELRDSTTIDVDAKEKSRQQ). The tract at residues 41–76 (DGMKDGEDKGAQPAASKELRDSTTIDVDAKEKSRQQ) is disordered.

It belongs to the TatA/E family. As to quaternary structure, the Tat system comprises two distinct complexes: a TatABC complex, containing multiple copies of TatA, TatB and TatC subunits, and a separate TatA complex, containing only TatA subunits. Substrates initially bind to the TatABC complex, which probably triggers association of the separate TatA complex to form the active translocon.

Its subcellular location is the cell inner membrane. Part of the twin-arginine translocation (Tat) system that transports large folded proteins containing a characteristic twin-arginine motif in their signal peptide across membranes. TatA could form the protein-conducting channel of the Tat system. This is Sec-independent protein translocase protein TatA from Cupriavidus taiwanensis (strain DSM 17343 / BCRC 17206 / CCUG 44338 / CIP 107171 / LMG 19424 / R1) (Ralstonia taiwanensis (strain LMG 19424)).